Consider the following 400-residue polypeptide: Tryptophan--tRNA ligase (400 aa).

The short motif at 12-20 (PTGALHLGH) is the 'HIGH' region element. The interval 173–241 (REPGFEQKAL…RLFGYLEGAR (69 aa)) is insert. A 'KMSKS' region motif is present at residues 265 to 269 (KMSKS). Position 268 (K268) interacts with ATP. The disordered stretch occupies residues 280 to 305 (KASVEKKVRTMPTDPARVRRTDPGDP). The span at 295–304 (ARVRRTDPGD) shows a compositional bias: basic and acidic residues.

The protein belongs to the class-I aminoacyl-tRNA synthetase family. As to quaternary structure, homodimer.

It localises to the cytoplasm. It carries out the reaction tRNA(Trp) + L-tryptophan + ATP = L-tryptophyl-tRNA(Trp) + AMP + diphosphate + H(+). This is Tryptophan--tRNA ligase (trpS) from Ralstonia nicotianae (strain ATCC BAA-1114 / GMI1000) (Ralstonia solanacearum).